Here is a 38-residue protein sequence, read N- to C-terminus: Photosystem II reaction center protein L (38 aa).

A helical transmembrane segment spans residues 17–37 (SLYWGLLLIFVLAVLFSSYIF).

The protein belongs to the PsbL family. In terms of assembly, PSII is composed of 1 copy each of membrane proteins PsbA, PsbB, PsbC, PsbD, PsbE, PsbF, PsbH, PsbI, PsbJ, PsbK, PsbL, PsbM, PsbT, PsbX, PsbY, PsbZ, Psb30/Ycf12, at least 3 peripheral proteins of the oxygen-evolving complex and a large number of cofactors. It forms dimeric complexes.

Its subcellular location is the plastid. The protein resides in the chloroplast thylakoid membrane. Functionally, one of the components of the core complex of photosystem II (PSII). PSII is a light-driven water:plastoquinone oxidoreductase that uses light energy to abstract electrons from H(2)O, generating O(2) and a proton gradient subsequently used for ATP formation. It consists of a core antenna complex that captures photons, and an electron transfer chain that converts photonic excitation into a charge separation. This subunit is found at the monomer-monomer interface and is required for correct PSII assembly and/or dimerization. This Tetradesmus obliquus (Green alga) protein is Photosystem II reaction center protein L.